We begin with the raw amino-acid sequence, 392 residues long: Protein O-glucosyltransferase 1 (392 aa).

The signal sequence occupies residues 1-23 (MERLSGCRLRPWMLLLLLFPVQG). Intrachain disulfides connect Cys-49-Cys-56, Cys-54-Cys-357, Cys-102-Cys-108, and Cys-263-Cys-286. The N-linked (GlcNAc...) asparagine glycan is linked to Asn-53. Positions 103-107 (MFPSR) are interaction with the consensus sequence C-X-S-X-[PA]-C in peptide substrates. Asp-133 serves as the catalytic Proton donor/acceptor. An interaction with the consensus sequence C-X-S-X-[PA]-C in peptide substrates region spans residues 172 to 178 (AVWPLYP). Tyr-177 lines the UDP-alpha-D-glucose pocket. The N-linked (GlcNAc...) asparagine glycan is linked to Asn-204. UDP-alpha-D-glucose contacts are provided by residues Ser-212, Arg-218, and 274–279 (VAASFR). N-linked (GlcNAc...) asparagine glycosylation is present at Asn-373. Residues 389 to 392 (KTEL) carry the Prevents secretion from ER motif.

Belongs to the glycosyltransferase 90 family.

It is found in the endoplasmic reticulum lumen. The enzyme catalyses L-seryl-[EGF-like domain protein] + UDP-alpha-D-xylose = 3-O-(beta-D-xylosyl)-L-seryl-[EGF-like domain protein] + UDP + H(+). It catalyses the reaction L-seryl-[EGF-like domain protein] + UDP-alpha-D-glucose = 3-O-(beta-D-glucosyl)-L-seryl-[EGF-like domain protein] + UDP + H(+). It participates in protein modification; protein glycosylation. Functionally, dual specificity glycosyltransferase that catalyzes the transfer of glucose and xylose from UDP-glucose and UDP-xylose, respectively, to a serine residue found in the consensus sequence of C-X-S-X-P-C. Specifically targets extracellular EGF repeats of protein such as CRB2, F7, F9 and NOTCH2. Acts as a positive regulator of Notch signaling by mediating O-glucosylation of Notch, leading to regulate muscle development. Notch glucosylation does not affect Notch ligand binding. Required during early development to promote gastrulation: acts by mediating O-glucosylation of CRB2, which is required for CRB2 localization to the cell membrane. This Rattus norvegicus (Rat) protein is Protein O-glucosyltransferase 1 (Poglut1).